The primary structure comprises 302 residues: MIALLIALFAAIHAPAVRSHGYLSVPTARQYKCFKDGNFYWPDNGDNIPDAACRNAYKSVYYKYRALDLESGAAASTAQYMFQQYMEYAAVAGPNYDDFDLIKQRVVPHTLCGAGSNDRNSVFGDKSGMDEPFNNWRPNTLYLNRYQPVYQMNVHFCPTAIHEPSYFEVFITKSNWDRRNPITWNELEYIGGNDSNLIPNPGDSLCDNSLVYSIPVVIPYRSNQFVMYVRWQRIDPVGEGFYNCADLVFETLDDECRYAQMAKVVRSQLQKHKLDARIDHNDEESCWRARKSNYSSFFNPGF.

The N-terminal stretch at 1 to 19 (MIALLIALFAAIHAPAVRS) is a signal peptide. N-linked (GlcNAc...) asparagine; by host glycosylation is found at N193 and N293.

Homodimer; disulfide-linked.

The protein resides in the host membrane. Functionally, component of the virus occlusion bodies, which are large proteinaceous structures (polyhedra), that protect the virus from the outside environment for extended periods until they are ingested by insect larvae. This is Spheroidin-like protein (SLP) from Autographa californica nuclear polyhedrosis virus (AcMNPV).